The following is a 135-amino-acid chain: Large ribosomal subunit protein eL32 (135 aa).

A Glycyl lysine isopeptide (Lys-Gly) (interchain with G-Cter in SUMO2) cross-link involves residue lysine 9. N6-succinyllysine is present on lysine 50. Serine 62 is subject to Phosphoserine.

The protein belongs to the eukaryotic ribosomal protein eL32 family. As to quaternary structure, component of the large ribosomal subunit.

Its subcellular location is the cytoplasm. In terms of biological role, component of the large ribosomal subunit. The ribosome is a large ribonucleoprotein complex responsible for the synthesis of proteins in the cell. The sequence is that of Large ribosomal subunit protein eL32 (RPL32) from Macaca fascicularis (Crab-eating macaque).